We begin with the raw amino-acid sequence, 131 residues long: UPF0102 protein YraN (131 aa).

The protein belongs to the UPF0102 family.

This is UPF0102 protein YraN from Salmonella typhimurium (strain LT2 / SGSC1412 / ATCC 700720).